The chain runs to 447 residues: Serine/threonine-protein phosphatase 2A 55 kDa regulatory subunit B gamma isoform (447 aa).

7 WD repeats span residues 22–61 (TEADVISTVEFNHTGELLATGDKGGRVVIFQREPESKNAP), 87–128 (EIEE…KRPE), 171–209 (GHTYHINSISVNSDCETYMSADDLRINLWHLAITDRSFN), 220–260 (DLTE…LCDK), 279–317 (EIISSVSDVKFSHSGRYMLTRDYLTVKVWDLNMEARPIE), 334–375 (ESDC…DVTL), and 410–446 (DFTKKILHTAWHPAENIIAIAATNNLYIFQDKVNSDM).

The protein belongs to the phosphatase 2A regulatory subunit B family. In terms of assembly, PP2A consists of a common heterodimeric core enzyme, composed of a 36 kDa catalytic subunit (subunit C) and a 65 kDa constant regulatory subunit (PR65 or subunit A), that associates with a variety of regulatory subunits. Proteins that associate with the core dimer include three families of regulatory subunits B (the R2/B/PR55/B55, R3/B''/PR72/PR130/PR59 and R5/B'/B56 families), the 48 kDa variable regulatory subunit, viral proteins, and cell signaling molecules. Interacts with IER5.

The B regulatory subunit might modulate substrate selectivity and catalytic activity, and might also direct the localization of the catalytic enzyme to a particular subcellular compartment. The polypeptide is Serine/threonine-protein phosphatase 2A 55 kDa regulatory subunit B gamma isoform (Ppp2r2c) (Mus musculus (Mouse)).